A 361-amino-acid polypeptide reads, in one-letter code: tRNA-specific 2-thiouridylase MnmA (361 aa).

ATP contacts are provided by residues 6 to 13 (AMSGGVDS) and Leu-32. The active-site Nucleophile is Cys-99. The cysteines at positions 99 and 196 are disulfide-linked. An ATP-binding site is contributed by Gly-123. The tract at residues 145 to 147 (RDQ) is interaction with tRNA. Catalysis depends on Cys-196, which acts as the Cysteine persulfide intermediate.

The protein belongs to the MnmA/TRMU family.

The protein localises to the cytoplasm. The enzyme catalyses S-sulfanyl-L-cysteinyl-[protein] + uridine(34) in tRNA + AH2 + ATP = 2-thiouridine(34) in tRNA + L-cysteinyl-[protein] + A + AMP + diphosphate + H(+). Its function is as follows. Catalyzes the 2-thiolation of uridine at the wobble position (U34) of tRNA, leading to the formation of s(2)U34. This Gluconobacter oxydans (strain 621H) (Gluconobacter suboxydans) protein is tRNA-specific 2-thiouridylase MnmA.